Consider the following 293-residue polypeptide: MDFIAILIGLGPLLGWGLFPTIASKFGGRPVNQIFGATVGTLIFAIVLALFKGIGLPGGMALVFSLISGAGWAFGQIITFKAFELVGSSRAMPITTAFQLLGASLWGVFALGNWPGITNKIIGFLALLVILIGARMTVWTETKQQEYSKNLRSAVILLLVGEIGYWIYSAAPQATDIGGFKAFLPQAIGMVIVAVIYALMNMSKGNAFKEKVSWQQTISGFFFAFAALTYLISAQPNMNGLATGFVLSQTSVVLATLTGIFFLNQKKTSKELMITIVGLVLILVAASITVFIK.

A run of 10 helical transmembrane segments spans residues 5–24 (AILI…TIAS), 34–51 (IFGA…LALF), 58–80 (GGMA…IITF), 95–114 (TTAF…LGNW), 121–138 (IIGF…RMTV), 153–170 (SAVI…IYSA), 177–199 (IGGF…IYAL), 212–234 (VSWQ…LISA), 241–263 (LATG…IFFL), and 273–292 (MITI…TVFI).

The protein belongs to the GRP transporter (TC 2.A.7.5) family.

It localises to the cell membrane. Its function is as follows. Could be involved in the uptake of ribose. This is Putative ribose uptake protein RbsU (rbsU) from Staphylococcus epidermidis (strain ATCC 35984 / DSM 28319 / BCRC 17069 / CCUG 31568 / BM 3577 / RP62A).